The sequence spans 687 residues: Chloride channel protein ClC-Kb (687 aa).

Over 1 to 50 the chain is Cytoplasmic; it reads MEEFVGLREGSSGNPVTLQELWGPCPRIRRGIRGGLEWLKQKLFRLGEDW. Transmembrane regions (helical) follow at residues 51 to 82 and 91 to 111; these read YFLM…QWLY and LRYL…SGFS. The helical intramembrane region spans 116–127; that stretch reads PSSGGSGIPEVK. Ser-121 lines the chloride pocket. 2 helical membrane passes run 141-160 and 161-180; these read IKNF…CGST and LFLG…AAYL. Asn-193 carries an N-linked (GlcNAc...) asparagine glycan. The helical intramembrane region spans 203–224; the sequence is AAAAVGVATVFAAPFSGVLFSI. Residues 236-255 form a helical membrane-spanning segment; the sequence is YWRGFFAATCGAFMFRLLAV. Residues Glu-259, Glu-261, Asp-278, and Glu-281 each coordinate Ca(2+). 2 helical membrane passes run 282 to 310 and 325 to 342; these read IFFF…FGFI and PVYS…TYPP. Residues 349-360 constitute an intramembrane region (helical); that stretch reads ASRLSMKQHLDS. Helical transmembrane passes span 400–420 and 421–440; these read GTLA…TTIP and MPAG…GRLF. Phe-426 serves as a coordination point for chloride. The segment at residues 464-496 is an intramembrane region (helical); that stretch reads GGYALAGAAAFSGAVTHTISTALLAFEVTGQIV. A helical membrane pass occupies residues 500–520; the sequence is PVLMAVLAANAIAQSCQPSFY. The Cytoplasmic portion of the chain corresponds to 521-687; that stretch reads DGTVIVKKLP…SNLTNPPAPK (167 aa). 2 CBS domains span residues 551 to 609 and 626 to 684; these read MNHS…EPPS and CPTE…TNPP.

Belongs to the chloride channel (TC 2.A.49) family. CLCNKB subfamily. In terms of assembly, homodimer. Interacts with BSND. In terms of processing, N-glycosylated.

The protein resides in the basolateral cell membrane. It carries out the reaction chloride(in) = chloride(out). It catalyses the reaction iodide(out) = iodide(in). The enzyme catalyses nitrate(in) = nitrate(out). The catalysed reaction is bromide(in) = bromide(out). Its activity is regulated as follows. Activated by extracellular Ca(2+) and inhibited by extracellular acidic pH. Its function is as follows. Anion-selective channel permeable to small monovalent anions with ion selectivity for chloride &gt; bromide &gt; nitrate &gt; iodide. Forms a homodimeric channel where each subunit has its own ion conduction pathway. May conduct double-barreled currents controlled by two types of gates, two fast gates that control each subunit independently and a slow common gate that opens and shuts off both subunits simultaneously. Assembles with the regulatory subunit BSND/Barttin for sorting at the basolateral plasma membrane domain and functional switch to the ion conducting state. CLCNKB:BSND channels display mostly a linear current-voltage relationship controlled by common gate. Mediates chloride conductance along nephron segments, namely the thick ascending limb of Henle's loop, convoluted tubule and the collecting duct, contributing to the maintenance of systemic acid-base and electrolyte homeostasis. Conducts chloride currents in the stria vascularis of the inner ear to establish the endocochlear potential necessary for normal hearing. This Homo sapiens (Human) protein is Chloride channel protein ClC-Kb.